The following is a 308-amino-acid chain: 1D-myo-inositol 2-acetamido-2-deoxy-alpha-D-glucopyranoside deacetylase (308 aa).

His18, Asp21, and His153 together coordinate Zn(2+).

The protein belongs to the MshB deacetylase family. Requires Zn(2+) as cofactor.

It carries out the reaction 1D-myo-inositol 2-acetamido-2-deoxy-alpha-D-glucopyranoside + H2O = 1D-myo-inositol 2-amino-2-deoxy-alpha-D-glucopyranoside + acetate. Catalyzes the deacetylation of 1D-myo-inositol 2-acetamido-2-deoxy-alpha-D-glucopyranoside (GlcNAc-Ins) in the mycothiol biosynthesis pathway. In Salinispora arenicola (strain CNS-205), this protein is 1D-myo-inositol 2-acetamido-2-deoxy-alpha-D-glucopyranoside deacetylase.